Here is a 623-residue protein sequence, read N- to C-terminus: F-box protein FBX14 (623 aa).

The disordered stretch occupies residues 18 to 48 (LNLNPPCSSSSSSSSAATFTNKSRNFKSSPP). A compositionally biased stretch (polar residues) spans 33-45 (AATFTNKSRNFKS). In terms of domain architecture, F-box spans 54–97 (VLENVLENVLQFLTSRCDRNAVSLVCRSWYRVEAQTRLEVFIGN). Lysine 119 is a 1D-myo-inositol hexakisphosphate binding site. The interval 126–127 (DF) is interaction with auxin-responsive proteins. Residues 158 to 159 (KR) and arginine 391 contribute to the 1D-myo-inositol hexakisphosphate site. Positions 394 to 399 (PFDPRE) are interaction with auxin-responsive proteins. Residue 447-449 (VFR) participates in 1D-myo-inositol hexakisphosphate binding. The interval 451–455 (CIMGR) is interaction with auxin-responsive proteins. Arginine 482 contacts 1D-myo-inositol hexakisphosphate. Residues 510–511 (AF) are interaction with auxin-responsive proteins. 1D-myo-inositol hexakisphosphate contacts are provided by residues 530 to 531 (QK) and arginine 555.

As to quaternary structure, part of a SCF (SKP1-cullin-F-box) protein ligase complex. May interact with auxin and auxin-responsive proteins.

Its subcellular location is the nucleus. Its pathway is protein modification; protein ubiquitination. In Arabidopsis thaliana (Mouse-ear cress), this protein is F-box protein FBX14 (FBX14).